A 255-amino-acid polypeptide reads, in one-letter code: 28.1 kDa virulence protein (255 aa).

This sequence belongs to the SpvA family.

In terms of biological role, not known. This protein is involved in the virulence of salmonellas. The polypeptide is 28.1 kDa virulence protein (mkaB) (Salmonella typhimurium).